A 148-amino-acid chain; its full sequence is Large ribosomal subunit protein uL15 (148 aa).

Residues 1 to 30 (MSTHKKKTRKLRGHVSHGHGRIGKHRKHPG) show a composition bias toward basic residues. Residues 1–37 (MSTHKKKTRKLRGHVSHGHGRIGKHRKHPGGRGNAGG) form a disordered region.

The protein belongs to the universal ribosomal protein uL15 family.

The chain is Large ribosomal subunit protein uL15 (RpL27A) from Tenebrio molitor (Yellow mealworm beetle).